Here is a 462-residue protein sequence, read N- to C-terminus: Protein phosphatase 1M (462 aa).

Basic residues predominate over residues 1–10 (MSAGWFRRRF). Residues 1–66 (MSAGWFRRRF…PVRSPARGRT (66 aa)) are disordered. One can recognise a PPM-type phosphatase domain in the interval 100-452 (EFGIEEDQEW…DDVSVFVIPL (353 aa)). The Mn(2+) site is built by Asp127 and Gly128.

Belongs to the PP2C family. Requires Mg(2+) as cofactor. Mn(2+) serves as cofactor. In terms of tissue distribution, widely expressed with highest levels in testis and lower levels in lung, kidney and brain.

Its subcellular location is the nucleus. It carries out the reaction O-phospho-L-seryl-[protein] + H2O = L-seryl-[protein] + phosphate. The catalysed reaction is O-phospho-L-threonyl-[protein] + H2O = L-threonyl-[protein] + phosphate. The sequence is that of Protein phosphatase 1M from Mus musculus (Mouse).